Here is a 272-residue protein sequence, read N- to C-terminus: Glutamate racemase (272 aa).

Substrate-binding positions include 13-14 (DS) and 45-46 (YG). C76 serves as the catalytic Proton donor/acceptor. Substrate is bound at residue 77-78 (NT). Catalysis depends on C186, which acts as the Proton donor/acceptor. Residue 187–188 (TH) coordinates substrate.

The protein belongs to the aspartate/glutamate racemases family.

It carries out the reaction L-glutamate = D-glutamate. The protein operates within cell wall biogenesis; peptidoglycan biosynthesis. Provides the (R)-glutamate required for cell wall biosynthesis. In Cupriavidus pinatubonensis (strain JMP 134 / LMG 1197) (Cupriavidus necator (strain JMP 134)), this protein is Glutamate racemase.